The primary structure comprises 135 residues: Histone H2A (135 aa).

The disordered stretch occupies residues 1-24 (MTGGGKSGGKASSGKNAQSRSSKA). N6-acetyllysine is present on residues lysine 6 and lysine 10. Glutamine 107 is modified (N5-methylglutamine). Residue serine 132 is modified to Phosphoserine. A [ST]-Q motif motif is present at residues 132–133 (SQ).

Belongs to the histone H2A family. In terms of assembly, the nucleosome is a histone octamer containing two molecules each of H2A, H2B, H3 and H4 assembled in one H3-H4 heterotetramer and two H2A-H2B heterodimers. The octamer wraps approximately 147 bp of DNA. Phosphorylated to form H2AS128ph (gamma-H2A) in response to DNA double-strand breaks (DSBs) generated by exogenous genotoxic agents and by stalled replication forks. Phosphorylation is dependent on the DNA damage checkpoint kinases MEC1/ATR and TEL1/ATM, spreads on either side of a detected DSB site and may mark the surrounding chromatin for recruitment of proteins required for DNA damage signaling and repair. Gamma-H2A is removed from the DNA prior to the strand invasion-primer extension step of the repair process and subsequently dephosphorylated. Dephosphorylation is necessary for efficient recovery from the DNA damage checkpoint. In terms of processing, acetylated by ESA1 to form H2AK4ac and H2AK7ac.

The protein localises to the nucleus. Its subcellular location is the chromosome. Core component of nucleosome which plays a central role in DNA double strand break (DSB) repair. Nucleosomes wrap and compact DNA into chromatin, limiting DNA accessibility to the cellular machineries which require DNA as a template. Histones thereby play a central role in transcription regulation, DNA repair, DNA replication and chromosomal stability. DNA accessibility is regulated via a complex set of post-translational modifications of histones, also called histone code, and nucleosome remodeling. This is Histone H2A (HTA1) from Podospora anserina (Pleurage anserina).